A 394-amino-acid chain; its full sequence is Elongation factor Tu 1 (394 aa).

In terms of domain architecture, tr-type G spans 10–204 (KPHVNVGTIG…ALDTYIPEPA (195 aa)). The tract at residues 19–26 (GHVDHGKT) is G1. GTP is bound at residue 19–26 (GHVDHGKT). Thr-26 lines the Mg(2+) pocket. The segment at 60 to 64 (GITIN) is G2. Residues 81–84 (DCPG) are G3. GTP-binding positions include 81 to 85 (DCPGH) and 136 to 139 (NKCD). The interval 136–139 (NKCD) is G4. A G5 region spans residues 174–176 (SAL).

This sequence belongs to the TRAFAC class translation factor GTPase superfamily. Classic translation factor GTPase family. EF-Tu/EF-1A subfamily. As to quaternary structure, monomer.

The protein resides in the cytoplasm. The enzyme catalyses GTP + H2O = GDP + phosphate + H(+). In terms of biological role, GTP hydrolase that promotes the GTP-dependent binding of aminoacyl-tRNA to the A-site of ribosomes during protein biosynthesis. The polypeptide is Elongation factor Tu 1 (Shewanella frigidimarina (strain NCIMB 400)).